The primary structure comprises 201 residues: NADH-quinone oxidoreductase subunit C (201 aa).

The protein belongs to the complex I 30 kDa subunit family. NDH-1 is composed of 14 different subunits. Subunits NuoB, C, D, E, F, and G constitute the peripheral sector of the complex.

Its subcellular location is the cell inner membrane. It carries out the reaction a quinone + NADH + 5 H(+)(in) = a quinol + NAD(+) + 4 H(+)(out). In terms of biological role, NDH-1 shuttles electrons from NADH, via FMN and iron-sulfur (Fe-S) centers, to quinones in the respiratory chain. The immediate electron acceptor for the enzyme in this species is believed to be ubiquinone. Couples the redox reaction to proton translocation (for every two electrons transferred, four hydrogen ions are translocated across the cytoplasmic membrane), and thus conserves the redox energy in a proton gradient. The protein is NADH-quinone oxidoreductase subunit C of Aromatoleum aromaticum (strain DSM 19018 / LMG 30748 / EbN1) (Azoarcus sp. (strain EbN1)).